We begin with the raw amino-acid sequence, 216 residues long: Small ribosomal subunit protein uS3 (216 aa).

A KH type-2 domain is found at 38-108 (LREFVKKKLH…DLAIDIQEVK (71 aa)).

The protein belongs to the universal ribosomal protein uS3 family. Part of the 30S ribosomal subunit. Forms a tight complex with proteins S10 and S14.

Functionally, binds the lower part of the 30S subunit head. Binds mRNA in the 70S ribosome, positioning it for translation. This Desulfosudis oleivorans (strain DSM 6200 / JCM 39069 / Hxd3) (Desulfococcus oleovorans) protein is Small ribosomal subunit protein uS3.